The primary structure comprises 402 residues: uncharacterized protein (402 aa).

12 helical membrane-spanning segments follow: residues 11 to 31 (LALA…IDMY), 48 to 68 (LVQL…LIVG), 80 to 100 (LLIC…SPNI), 108 to 125 (FLQG…RAIV), 140 to 160 (LLMV…GAIL), 167 to 187 (WHTI…LIAL), 219 to 239 (FMGY…YVSG), 254 to 274 (VFSI…FIIG), 286 to 306 (LRIA…MTMI), 308 to 328 (GPLA…GMVL), 347 to 367 (SALL…LVGI), and 373 to 393 (VPMG…FFGL).

It belongs to the major facilitator superfamily. Bcr/CmlA family.

It is found in the cell membrane. This is an uncharacterized protein from Bacillus subtilis (strain 168).